A 617-amino-acid chain; its full sequence is V-type proton ATPase catalytic subunit A (617 aa).

250 to 257 (GAFGCGKT) provides a ligand contact to ATP.

The protein belongs to the ATPase alpha/beta chains family. As to quaternary structure, V-ATPase is a heteromultimeric enzyme made up of two complexes: the ATP-hydrolytic V1 complex and the proton translocation V0 complex. The V1 complex consists of three catalytic AB heterodimers that form a heterohexamer, three peripheral stalks each consisting of EG heterodimers, one central rotor including subunits D and F, and the regulatory subunits C and H. The proton translocation complex V0 consists of the proton transport subunit a, a ring of proteolipid subunits c9c'', rotary subunit d, subunits e and f, and the accessory subunits VhaAC45 and ATP6AP2.

The enzyme catalyses ATP + H2O + 4 H(+)(in) = ADP + phosphate + 5 H(+)(out). ATP hydrolysis occurs at the interface between the nucleotide-binding domains of subunits A and B. ATP hydrolysis triggers a conformational change in the subunits D and F, which induces a shift of subunit d. The c-ring is subsequently rotated and results in a continuous proton translocation across the membrane. Functionally, catalytic subunit of the V1 complex of vacuolar(H+)-ATPase (V-ATPase), a multisubunit enzyme composed of a peripheral complex (V1) that hydrolyzes ATP and a membrane integral complex (V0) that translocates protons. V-ATPase is responsible for acidifying and maintaining the pH of intracellular compartments and in some cell types, is targeted to the plasma membrane, where it is responsible for acidifying the extracellular environment. This is V-type proton ATPase catalytic subunit A (VHAA) from Manduca sexta (Tobacco hawkmoth).